The following is a 109-amino-acid chain: MSAQPVDIQIFGRSLRVNCPPEQQDALNQAAEDLNQRLQDLKVRTRVTNTEQLVFIAALNVCHELAQERGKTRDYASNMEQRIRMLQQTIEQALLEQGRITERQGAQFE.

Residues 21–99 (PEQQDALNQA…IEQALLEQGR (79 aa)) adopt a coiled-coil conformation.

It belongs to the ZapA family. Type 1 subfamily. As to quaternary structure, homodimer. Interacts with FtsZ.

The protein resides in the cytoplasm. Functionally, activator of cell division through the inhibition of FtsZ GTPase activity, therefore promoting FtsZ assembly into bundles of protofilaments necessary for the formation of the division Z ring. It is recruited early at mid-cell but it is not essential for cell division. The protein is Cell division protein ZapA of Pectobacterium carotovorum subsp. carotovorum (strain PC1).